The chain runs to 505 residues: RNA-binding region-containing protein 3 (505 aa).

Positions 15–90 constitute an RRM 1 domain; the sequence is KTLIIRHLPR…RTLVVEFAKD (76 aa). 4 disordered regions span residues 96–123, 193–236, 354–374, and 486–505; these read ILKD…QPSV, PPMF…EEER, AQVP…SEFI, and ARSA…GRKH. Residues 193 to 214 are compositionally biased toward pro residues; the sequence is PPMFEMPSGPLPPPFPPENPPL. Acidic residues-rich tracts occupy residues 221 to 235 and 361 to 370; these read GSEE…DEEE and EEQEEDEDIP. The RRM 2 domain maps to 405 to 488; the sequence is CRLYVKNVAK…KPLVVQFARS (84 aa). A compositionally biased stretch (basic and acidic residues) spans 491 to 505; sequence PKQESADPKKGGRKH.

In terms of assembly, component of the U11/U12 snRNPs that are part of the U12-type spliceosome.

It is found in the nucleus. Its function is as follows. Participates in pre-mRNA U12-dependent splicing, performed by the minor spliceosome which removes U12-type introns. U12-type introns comprise less than 1% of all non-coding sequences. This chain is RNA-binding region-containing protein 3, found in Danio rerio (Zebrafish).